A 350-amino-acid chain; its full sequence is DNA polymerase IV (350 aa).

The UmuC domain occupies 4–185; the sequence is IIHIDMDCFY…LPLGKLPGIG (182 aa). Mg(2+) contacts are provided by Asp-8 and Asp-103. Glu-104 is an active-site residue.

Belongs to the DNA polymerase type-Y family. As to quaternary structure, monomer. It depends on Mg(2+) as a cofactor.

It is found in the cytoplasm. The enzyme catalyses DNA(n) + a 2'-deoxyribonucleoside 5'-triphosphate = DNA(n+1) + diphosphate. Its function is as follows. Poorly processive, error-prone DNA polymerase involved in untargeted mutagenesis. Copies undamaged DNA at stalled replication forks, which arise in vivo from mismatched or misaligned primer ends. These misaligned primers can be extended by PolIV. Exhibits no 3'-5' exonuclease (proofreading) activity. May be involved in translesional synthesis, in conjunction with the beta clamp from PolIII. The polypeptide is DNA polymerase IV (Aeromonas hydrophila subsp. hydrophila (strain ATCC 7966 / DSM 30187 / BCRC 13018 / CCUG 14551 / JCM 1027 / KCTC 2358 / NCIMB 9240 / NCTC 8049)).